Consider the following 401-residue polypeptide: S-adenosylmethionine synthase (401 aa).

Residue 135 to 140 (GHGSGD) participates in ATP binding.

Belongs to the AdoMet synthase 2 family. The cofactor is Mg(2+).

It carries out the reaction L-methionine + ATP + H2O = S-adenosyl-L-methionine + phosphate + diphosphate. It participates in amino-acid biosynthesis; S-adenosyl-L-methionine biosynthesis; S-adenosyl-L-methionine from L-methionine: step 1/1. Its function is as follows. Catalyzes the formation of S-adenosylmethionine from methionine and ATP. In Methanothermobacter marburgensis (strain ATCC BAA-927 / DSM 2133 / JCM 14651 / NBRC 100331 / OCM 82 / Marburg) (Methanobacterium thermoautotrophicum), this protein is S-adenosylmethionine synthase (mat).